Reading from the N-terminus, the 155-residue chain is D-aminoacyl-tRNA deacylase (155 aa).

Residues Gly147 to Pro148 carry the Gly-cisPro motif, important for rejection of L-amino acids motif.

Belongs to the DTD family. As to quaternary structure, homodimer.

The protein resides in the cytoplasm. It carries out the reaction glycyl-tRNA(Ala) + H2O = tRNA(Ala) + glycine + H(+). The catalysed reaction is a D-aminoacyl-tRNA + H2O = a tRNA + a D-alpha-amino acid + H(+). In terms of biological role, an aminoacyl-tRNA editing enzyme that deacylates mischarged D-aminoacyl-tRNAs. Also deacylates mischarged glycyl-tRNA(Ala), protecting cells against glycine mischarging by AlaRS. Acts via tRNA-based rather than protein-based catalysis; rejects L-amino acids rather than detecting D-amino acids in the active site. By recycling D-aminoacyl-tRNA to D-amino acids and free tRNA molecules, this enzyme counteracts the toxicity associated with the formation of D-aminoacyl-tRNA entities in vivo and helps enforce protein L-homochirality. The sequence is that of D-aminoacyl-tRNA deacylase from Corynebacterium urealyticum (strain ATCC 43042 / DSM 7109).